We begin with the raw amino-acid sequence, 215 residues long: MNLLIMGLPGAGKGTQAEFIVKNYGVNHISTGDMFRAAMKNETEMGKLAKSFIDKGELVPDEVTNGIVKERLAQDDIKASGFLLDGYPRTIDQAHALDTMLEELGIKLDAVVNIVVNPDILVDRLSGRYICRNCGATYHKIFNPTKVEGVCDVCGSHDLYQRADDVPETVKNRLDVNIKESAPIIEHYTELGLVKNIEGEQEISQVTEDIKKVLG.

Residue 10 to 15 (GAGKGT) participates in ATP binding. An NMP region spans residues 30 to 59 (STGDMFRAAMKNETEMGKLAKSFIDKGELV). Residues threonine 31, arginine 36, 57 to 59 (ELV), 86 to 89 (GYPR), and glutamine 93 contribute to the AMP site. Residues 127 to 165 (GRYICRNCGATYHKIFNPTKVEGVCDVCGSHDLYQRADD) are LID. Arginine 128 provides a ligand contact to ATP. Zn(2+) contacts are provided by cysteine 131 and cysteine 134. 137–138 (TY) contacts ATP. Residues cysteine 151 and cysteine 154 each coordinate Zn(2+). Positions 162 and 173 each coordinate AMP. Glutamine 201 contributes to the ATP binding site.

This sequence belongs to the adenylate kinase family. In terms of assembly, monomer.

It localises to the cytoplasm. The catalysed reaction is AMP + ATP = 2 ADP. It functions in the pathway purine metabolism; AMP biosynthesis via salvage pathway; AMP from ADP: step 1/1. In terms of biological role, catalyzes the reversible transfer of the terminal phosphate group between ATP and AMP. Plays an important role in cellular energy homeostasis and in adenine nucleotide metabolism. The chain is Adenylate kinase from Lactococcus lactis subsp. lactis (strain IL1403) (Streptococcus lactis).